The primary structure comprises 493 residues: Galactose-1-phosphate uridylyltransferase 2 (493 aa).

Belongs to the galactose-1-phosphate uridylyltransferase type 2 family.

Its subcellular location is the cytoplasm. The enzyme catalyses alpha-D-galactose 1-phosphate + UDP-alpha-D-glucose = alpha-D-glucose 1-phosphate + UDP-alpha-D-galactose. It participates in carbohydrate metabolism; galactose metabolism. This Streptococcus pneumoniae (strain ATCC BAA-255 / R6) protein is Galactose-1-phosphate uridylyltransferase 2 (galT2).